The chain runs to 441 residues: MTESESASGMDGVVLGGTASGVGKTVATLAVARALADAGHDVQPAKAGPDFIDPSHHEPVVGTPSRSLDPWLSGTDGMRRTYHQGDGDVCVVEGMMGLYDGSVASTARVASELDLPVVLVVDASAGMQSVAATALGFQAYAAEASVDVDVAGVLAQRAHGGRHADGIRDALPDSLTYFGRVPPRDDLDVPDRHLGLHMGSEAAIDDDAVDAAAAHVAAKRIADVARTPPRPPAHDPAPDTGQTVAVADDAAFCFAYPATRERLRERADVVTFSPVAGDDLPACDGVYLPGGYPELHTDALADAPALDTLGARAADGLPVLGECGGLMALAESLTTTDGDTAEMAGVLPADVRMQDRYQALDHVELRATGDTLTAGSGATLRGHEFHYSAATVASDARFAFAVERGDGIDGDHDGLTEYRTLGTYAHVHPESTAFDAFLDAL.

Positions 243-434 constitute a GATase cobBQ-type domain; it reads TVAVADDAAF…AHVHPESTAF (192 aa). The active-site Nucleophile is Cys323.

This sequence belongs to the CobB/CbiA family. Mg(2+) is required as a cofactor.

It catalyses the reaction cob(II)yrinate + 2 L-glutamine + 2 ATP + 2 H2O = cob(II)yrinate a,c diamide + 2 L-glutamate + 2 ADP + 2 phosphate + 2 H(+). It functions in the pathway cofactor biosynthesis; adenosylcobalamin biosynthesis; cob(II)yrinate a,c-diamide from sirohydrochlorin (anaerobic route): step 10/10. In terms of biological role, catalyzes the ATP-dependent amidation of the two carboxylate groups at positions a and c of cobyrinate, using either L-glutamine or ammonia as the nitrogen source. This chain is Cobyrinate a,c-diamide synthase, found in Halobacterium salinarum (strain ATCC 700922 / JCM 11081 / NRC-1) (Halobacterium halobium).